The chain runs to 275 residues: NH(3)-dependent NAD(+) synthetase (275 aa).

46–53 (GISGGQDS) serves as a coordination point for ATP. Residue D52 participates in Mg(2+) binding. Residue R140 coordinates deamido-NAD(+). ATP is bound at residue T160. A Mg(2+)-binding site is contributed by E165. 2 residues coordinate deamido-NAD(+): K173 and D180. Positions 189 and 211 each coordinate ATP. 260–261 (HK) is a binding site for deamido-NAD(+).

It belongs to the NAD synthetase family. In terms of assembly, homodimer.

It catalyses the reaction deamido-NAD(+) + NH4(+) + ATP = AMP + diphosphate + NAD(+) + H(+). The protein operates within cofactor biosynthesis; NAD(+) biosynthesis; NAD(+) from deamido-NAD(+) (ammonia route): step 1/1. Its function is as follows. Catalyzes the ATP-dependent amidation of deamido-NAD to form NAD. Uses ammonia as a nitrogen source. This is NH(3)-dependent NAD(+) synthetase from Escherichia coli O157:H7.